The sequence spans 315 residues: Acetyl-coenzyme A carboxylase carboxyl transferase subunit alpha (315 aa).

In terms of domain architecture, CoA carboxyltransferase C-terminal spans 39 to 292 (LEDKSAKLLR…GDALEQELNG (254 aa)).

It belongs to the AccA family. In terms of assembly, acetyl-CoA carboxylase is a heterohexamer composed of biotin carboxyl carrier protein (AccB), biotin carboxylase (AccC) and two subunits each of ACCase subunit alpha (AccA) and ACCase subunit beta (AccD).

The protein localises to the cytoplasm. The catalysed reaction is N(6)-carboxybiotinyl-L-lysyl-[protein] + acetyl-CoA = N(6)-biotinyl-L-lysyl-[protein] + malonyl-CoA. It functions in the pathway lipid metabolism; malonyl-CoA biosynthesis; malonyl-CoA from acetyl-CoA: step 1/1. Its function is as follows. Component of the acetyl coenzyme A carboxylase (ACC) complex. First, biotin carboxylase catalyzes the carboxylation of biotin on its carrier protein (BCCP) and then the CO(2) group is transferred by the carboxyltransferase to acetyl-CoA to form malonyl-CoA. In Sphingopyxis alaskensis (strain DSM 13593 / LMG 18877 / RB2256) (Sphingomonas alaskensis), this protein is Acetyl-coenzyme A carboxylase carboxyl transferase subunit alpha.